A 241-amino-acid polypeptide reads, in one-letter code: ATP synthase subunit a (241 aa).

5 consecutive transmembrane segments (helical) span residues 30-50 (GQVF…VVIG), 91-111 (FIGT…LVPW), 128-148 (INTT…AGLS), 193-213 (LVVA…VMFL), and 214-234 (GLFT…YYIG).

It belongs to the ATPase A chain family. As to quaternary structure, F-type ATPases have 2 components, CF(1) - the catalytic core - and CF(0) - the membrane proton channel. CF(1) has five subunits: alpha(3), beta(3), gamma(1), delta(1), epsilon(1). CF(0) has four main subunits: a, b, b' and c.

It is found in the cellular thylakoid membrane. Key component of the proton channel; it plays a direct role in the translocation of protons across the membrane. The protein is ATP synthase subunit a of Prochlorococcus marinus (strain NATL1A).